Here is a 1299-residue protein sequence, read N- to C-terminus: Protein prickle (1299 aa).

Over residues methionine 1 to glycine 19 the composition is skewed to gly residues. Disordered regions lie at residues methionine 1–alanine 24, alanine 115–glutamine 181, glutamate 241–proline 289, leucine 368–serine 396, and leucine 425–serine 527. Positions serine 145–histidine 159 are enriched in basic residues. Residues asparagine 168–glutamine 181 show a composition bias toward polar residues. A compositionally biased stretch (pro residues) spans proline 263–alanine 272. Residues leucine 425–glycine 434 show a composition bias toward low complexity. The span at alanine 435–alanine 445 shows a compositional bias: gly residues. Over residues proline 457–glutamine 469 the composition is skewed to polar residues. Residues methionine 515–proline 623 form the PET domain. Residues aspartate 516–aspartate 525 show a composition bias toward basic and acidic residues. 3 consecutive LIM zinc-binding domains span residues arginine 622 to lysine 686, proline 687 to glutamate 747, and tyrosine 748 to proline 810. 3 disordered regions span residues glycine 807–threonine 865, lysine 902–glutamine 940, and alanine 1026–serine 1249. Positions proline 844–alanine 864 are enriched in low complexity. 2 stretches are compositionally biased toward polar residues: residues arginine 922–asparagine 934 and serine 1070–serine 1081. The segment covering serine 1089 to serine 1101 has biased composition (low complexity). Basic and acidic residues predominate over residues glycine 1136–glycine 1150. Positions arginine 1151–serine 1183 are enriched in basic residues. Positions serine 1216–glutamate 1231 are enriched in basic and acidic residues. Residues valine 1238 to serine 1249 are compositionally biased toward low complexity.

This sequence belongs to the prickle / espinas / testin family. Interacts with dsh; PET and LIM domains interact with dsh DEP domain, in wing cells. Interacts with Vang in photoreceptor cells. As to expression, expressed in the wing, leg and eye imaginal disks. Expressed within the photoreceptors of the eye.

It is found in the cell membrane. In terms of biological role, acts in a planar cell polarity (PCP) complex; polarization along the apical/basal axis of epithelial cells. Correct expression of the alternative isoforms is required for PCP signaling in imaginal disks. PCP signaling in the wing disk requires the receptor fz and the cytoplasmic proteins dsh and pk. These act in a feedback loop leading to activation of the jnk cascade and subsequent polarized arrangement of hairs and bristles. Dgo and pk compete with one another for dsh binding, thereby modulating fz dsh activity and ensuring tight control over fz PCP signaling. Vang, stan and pk function together to regulate the establishment of tissue polarity in the adult eye. This Drosophila melanogaster (Fruit fly) protein is Protein prickle.